Consider the following 102-residue polypeptide: ATP-dependent Clp protease adapter protein ClpS (102 aa).

Belongs to the ClpS family. In terms of assembly, binds to the N-terminal domain of the chaperone ClpA.

Functionally, involved in the modulation of the specificity of the ClpAP-mediated ATP-dependent protein degradation. The protein is ATP-dependent Clp protease adapter protein ClpS of Shewanella loihica (strain ATCC BAA-1088 / PV-4).